A 398-amino-acid polypeptide reads, in one-letter code: Acetate kinase (398 aa).

Residue Asn7 coordinates Mg(2+). Position 14 (Lys14) interacts with ATP. Residue Arg92 participates in substrate binding. Residue Asp149 is the Proton donor/acceptor of the active site. Residues 209 to 213 (HLGNG), 284 to 286 (DFR), and 332 to 336 (GVGEN) each bind ATP. Glu385 is a Mg(2+) binding site.

Belongs to the acetokinase family. Homodimer. It depends on Mg(2+) as a cofactor. The cofactor is Mn(2+).

It localises to the cytoplasm. The catalysed reaction is acetate + ATP = acetyl phosphate + ADP. It participates in metabolic intermediate biosynthesis; acetyl-CoA biosynthesis; acetyl-CoA from acetate: step 1/2. Functionally, catalyzes the formation of acetyl phosphate from acetate and ATP. Can also catalyze the reverse reaction. The sequence is that of Acetate kinase from Clostridioides difficile (strain 630) (Peptoclostridium difficile).